A 118-amino-acid polypeptide reads, in one-letter code: Aspartate 1-decarboxylase (118 aa).

S25 acts as the Schiff-base intermediate with substrate; via pyruvic acid in catalysis. S25 carries the post-translational modification Pyruvic acid (Ser). T57 provides a ligand contact to substrate. Y58 (proton donor) is an active-site residue. Residue 73-75 participates in substrate binding; that stretch reads GAA.

Belongs to the PanD family. As to quaternary structure, heterooctamer of four alpha and four beta subunits. It depends on pyruvate as a cofactor. Post-translationally, is synthesized initially as an inactive proenzyme, which is activated by self-cleavage at a specific serine bond to produce a beta-subunit with a hydroxyl group at its C-terminus and an alpha-subunit with a pyruvoyl group at its N-terminus.

It localises to the cytoplasm. It catalyses the reaction L-aspartate + H(+) = beta-alanine + CO2. It functions in the pathway cofactor biosynthesis; (R)-pantothenate biosynthesis; beta-alanine from L-aspartate: step 1/1. Functionally, catalyzes the pyruvoyl-dependent decarboxylation of aspartate to produce beta-alanine. This Hyphomonas neptunium (strain ATCC 15444) protein is Aspartate 1-decarboxylase.